A 115-amino-acid chain; its full sequence is MKFVLLFGVLSLTLFSYSSAEMLDDFDQADEDELLSLIEKEEARAKECTPRFYDCSHDRHSCCRSELFKDVCTCFYPEGGDNEVCTCQQPKHLKYMEKAADKAKKFGGKIMKWFS.

The signal sequence occupies residues 1–20 (MKFVLLFGVLSLTLFSYSSA). The propeptide occupies 21–44 (EMLDDFDQADEDELLSLIEKEEAR). 4 disulfides stabilise this stretch: Cys-48–Cys-63, Cys-55–Cys-72, Cys-62–Cys-87, and Cys-74–Cys-85.

Belongs to the neurotoxin 19 (CSTX) family. 01 subfamily. As to expression, expressed by the venom gland.

It is found in the secreted. The protein is U3-lycotoxin-Ls1e of Lycosa singoriensis (Wolf spider).